The primary structure comprises 314 residues: tRNA dimethylallyltransferase (314 aa).

Residue 13–20 (GPTAVGKT) participates in ATP binding. 15-20 (TAVGKT) is a substrate binding site. The segment at 38–41 (DSMQ) is interaction with substrate tRNA.

Belongs to the IPP transferase family. As to quaternary structure, monomer. Mg(2+) serves as cofactor.

The catalysed reaction is adenosine(37) in tRNA + dimethylallyl diphosphate = N(6)-dimethylallyladenosine(37) in tRNA + diphosphate. Catalyzes the transfer of a dimethylallyl group onto the adenine at position 37 in tRNAs that read codons beginning with uridine, leading to the formation of N6-(dimethylallyl)adenosine (i(6)A). The chain is tRNA dimethylallyltransferase from Bacillus velezensis (strain DSM 23117 / BGSC 10A6 / LMG 26770 / FZB42) (Bacillus amyloliquefaciens subsp. plantarum).